A 461-amino-acid polypeptide reads, in one-letter code: L-seryl-tRNA(Sec) selenium transferase (461 aa).

Lys294 carries the post-translational modification N6-(pyridoxal phosphate)lysine.

This sequence belongs to the SelA family. The cofactor is pyridoxal 5'-phosphate.

Its subcellular location is the cytoplasm. The enzyme catalyses L-seryl-tRNA(Sec) + selenophosphate + H(+) = L-selenocysteinyl-tRNA(Sec) + phosphate. It participates in aminoacyl-tRNA biosynthesis; selenocysteinyl-tRNA(Sec) biosynthesis; selenocysteinyl-tRNA(Sec) from L-seryl-tRNA(Sec) (bacterial route): step 1/1. Its function is as follows. Converts seryl-tRNA(Sec) to selenocysteinyl-tRNA(Sec) required for selenoprotein biosynthesis. This Actinobacillus pleuropneumoniae serotype 7 (strain AP76) protein is L-seryl-tRNA(Sec) selenium transferase.